The following is a 168-amino-acid chain: S-ribosylhomocysteine lyase (168 aa).

Residues His54, His58, and Cys128 each contribute to the Fe cation site.

It belongs to the LuxS family. Homodimer. The cofactor is Fe cation.

It catalyses the reaction S-(5-deoxy-D-ribos-5-yl)-L-homocysteine = (S)-4,5-dihydroxypentane-2,3-dione + L-homocysteine. Functionally, involved in the synthesis of autoinducer 2 (AI-2) which is secreted by bacteria and is used to communicate both the cell density and the metabolic potential of the environment. The regulation of gene expression in response to changes in cell density is called quorum sensing. Catalyzes the transformation of S-ribosylhomocysteine (RHC) to homocysteine (HC) and 4,5-dihydroxy-2,3-pentadione (DPD). The protein is S-ribosylhomocysteine lyase of Mannheimia succiniciproducens (strain KCTC 0769BP / MBEL55E).